A 485-amino-acid chain; its full sequence is Cysteine--tRNA ligase (485 aa).

Residue cysteine 29 coordinates Zn(2+). Positions 31 to 41 (ATVQGMPHVGH) match the 'HIGH' region motif. The tract at residues 174–198 (QRVEDMQDAPDADPRGKRDPHDFAL) is disordered. Basic and acidic residues predominate over residues 185–197 (ADPRGKRDPHDFA). 3 residues coordinate Zn(2+): cysteine 227, histidine 252, and glutamate 256. The 'KMSKS' region signature appears at 283 to 287 (KMSKS). Position 286 (lysine 286) interacts with ATP.

It belongs to the class-I aminoacyl-tRNA synthetase family. Monomer. It depends on Zn(2+) as a cofactor.

It localises to the cytoplasm. It catalyses the reaction tRNA(Cys) + L-cysteine + ATP = L-cysteinyl-tRNA(Cys) + AMP + diphosphate. This Micrococcus luteus (strain ATCC 4698 / DSM 20030 / JCM 1464 / CCM 169 / CCUG 5858 / IAM 1056 / NBRC 3333 / NCIMB 9278 / NCTC 2665 / VKM Ac-2230) (Micrococcus lysodeikticus) protein is Cysteine--tRNA ligase.